Consider the following 137-residue polypeptide: MRHGKAHRKLGRTSAHRTAMFANMSASLIKHEQIVTTLPKAKELRPIVEKLVTLAKRGDLHARRQAISSVRDVEQVGKLFAVLGPRYKERQGGYIRVLKAGFRYGDNAPMAVIEFVDRDVSEKGKDSGPVYVNDAED.

The protein belongs to the bacterial ribosomal protein bL17 family. In terms of assembly, part of the 50S ribosomal subunit. Contacts protein L32.

This is Large ribosomal subunit protein bL17 from Caulobacter vibrioides (strain ATCC 19089 / CIP 103742 / CB 15) (Caulobacter crescentus).